The following is a 410-amino-acid chain: Arginine biosynthesis bifunctional protein ArgJ (410 aa).

Thr-160, Lys-186, Thr-197, Glu-283, Asn-405, and Thr-410 together coordinate substrate. Thr-197 acts as the Nucleophile in catalysis.

It belongs to the ArgJ family. In terms of assembly, heterotetramer of two alpha and two beta chains.

It is found in the cytoplasm. The enzyme catalyses N(2)-acetyl-L-ornithine + L-glutamate = N-acetyl-L-glutamate + L-ornithine. It carries out the reaction L-glutamate + acetyl-CoA = N-acetyl-L-glutamate + CoA + H(+). Its pathway is amino-acid biosynthesis; L-arginine biosynthesis; L-ornithine and N-acetyl-L-glutamate from L-glutamate and N(2)-acetyl-L-ornithine (cyclic): step 1/1. The protein operates within amino-acid biosynthesis; L-arginine biosynthesis; N(2)-acetyl-L-ornithine from L-glutamate: step 1/4. Its function is as follows. Catalyzes two activities which are involved in the cyclic version of arginine biosynthesis: the synthesis of N-acetylglutamate from glutamate and acetyl-CoA as the acetyl donor, and of ornithine by transacetylation between N(2)-acetylornithine and glutamate. This is Arginine biosynthesis bifunctional protein ArgJ from Geobacillus kaustophilus (strain HTA426).